Here is a 481-residue protein sequence, read N- to C-terminus: Glutamyl-tRNA(Gln) amidotransferase subunit A (481 aa).

Active-site charge relay system residues include lysine 76 and serine 151. Serine 175 (acyl-ester intermediate) is an active-site residue.

This sequence belongs to the amidase family. GatA subfamily. Heterotrimer of A, B and C subunits.

The enzyme catalyses L-glutamyl-tRNA(Gln) + L-glutamine + ATP + H2O = L-glutaminyl-tRNA(Gln) + L-glutamate + ADP + phosphate + H(+). Its function is as follows. Allows the formation of correctly charged Gln-tRNA(Gln) through the transamidation of misacylated Glu-tRNA(Gln) in organisms which lack glutaminyl-tRNA synthetase. The reaction takes place in the presence of glutamine and ATP through an activated gamma-phospho-Glu-tRNA(Gln). The protein is Glutamyl-tRNA(Gln) amidotransferase subunit A of Neisseria meningitidis serogroup B (strain ATCC BAA-335 / MC58).